The following is a 249-amino-acid chain: Ribosomal RNA small subunit methyltransferase J (249 aa).

S-adenosyl-L-methionine is bound by residues 97–98, 113–114, and D167; these read RD and ER.

The protein belongs to the methyltransferase superfamily. RsmJ family.

It is found in the cytoplasm. It catalyses the reaction guanosine(1516) in 16S rRNA + S-adenosyl-L-methionine = N(2)-methylguanosine(1516) in 16S rRNA + S-adenosyl-L-homocysteine + H(+). Functionally, specifically methylates the guanosine in position 1516 of 16S rRNA. This Aeromonas salmonicida (strain A449) protein is Ribosomal RNA small subunit methyltransferase J.